Consider the following 225-residue polypeptide: PKHD-type hydroxylase YbiX (225 aa).

A Fe2OG dioxygenase domain is found at 78 to 177; sequence TLSTPLFNRY…RVASFMWIQS (100 aa). The Fe cation site is built by His-96, Asp-98, and His-158. Arg-168 contributes to the 2-oxoglutarate binding site.

The cofactor is Fe(2+). Requires L-ascorbate as cofactor.

The polypeptide is PKHD-type hydroxylase YbiX (Shigella sonnei (strain Ss046)).